Reading from the N-terminus, the 367-residue chain is MSLRRLSVTAVRNLHPVTLSPSPRINILYGANGSGKTSVLEAVHLLGLARSFRSTRLNPVIQYEQQTCTVFGQVELAEGGTSNLGVSRERQGEFTIRIDGQNARSAAQLAEMLPLQLINPDSFRLLEGAPKVRRQFLDWGVFHVEPRFMATWQRLQKALRQRNSWLRHGTLDAVSQAAWDRELCLASAEIDEYRRNYIKALKPVFERTLSELVELDGLTLSYYRGWDKDRELNEVLATSLLRDQQMGHTQAGPQRADLRLRLGANNAADILSRGQQKLVVCALRIAQGHLVSQVRRGQCIYLVDDLPSELDEQHRRALCRLLEELNCQVFITCVDHEFLREGWQTETPVALFHVEQGRITQTHDHRE.

30–37 (GANGSGKT) lines the ATP pocket.

The protein belongs to the RecF family.

Its subcellular location is the cytoplasm. The RecF protein is involved in DNA metabolism; it is required for DNA replication and normal SOS inducibility. RecF binds preferentially to single-stranded, linear DNA. It also seems to bind ATP. The protein is DNA replication and repair protein RecF of Pseudomonas entomophila (strain L48).